We begin with the raw amino-acid sequence, 386 residues long: MDTERHATLLLDLVWPEVDEKAQGFIYAKDFPLVVSRMEEILNRGKLERDRAQLVSETGREILRKFGSDQEFFKVYKEDFRELFDGLVGTSFKSAVKSCAGDGVLDRLQDSQAVDGIQDEKTSSHALQEEVMRLREQVRVLSSKNDEKDREITARDEIIADLQGKDASPAGSPRSLQRMRTLQARVTSLEDELSFRDEVIREKDRELLNLTKRVGEFKDKYQFLEREFQFYKGHREQKSPDSIKEATRHEFIISELRRKITEQSEIIGQMRMQVEAKPGALHPQGIGSTAGLPLNLPLRLVLRLIIGAILAYLAFDIGIRSLKAVGGLFGSSSPATLTPKSELSWWEQNTLLSKLLWFFKDLFDTYNLDAGRDEVVSANYDKLFGV.

The stretch at 117 to 232 forms a coiled coil; that stretch reads IQDEKTSSHA…FLEREFQFYK (116 aa). Residues 296 to 315 form a helical membrane-spanning segment; that stretch reads LPLRLVLRLIIGAILAYLAF.

This sequence belongs to the MPS2 family.

It localises to the nucleus membrane. Its subcellular location is the cytoplasm. It is found in the cytoskeleton. The protein resides in the microtubule organizing center. The protein localises to the spindle pole body. Its function is as follows. Component of the spindle pole body (SPB) required for insertion of the nascent SPB into the nuclear envelope and for the proper execution of spindle pole body (SPB) duplication. The protein is Monopolar spindle protein 2 (MPS2) of Lachancea thermotolerans (strain ATCC 56472 / CBS 6340 / NRRL Y-8284) (Yeast).